A 311-amino-acid polypeptide reads, in one-letter code: NAD kinase (311 aa).

Catalysis depends on Asp-67, which acts as the Proton acceptor. NAD(+) is bound by residues Asp-67–Gly-68, Arg-72, Asn-140–Asp-141, Arg-151, Asp-170, Thr-181–Ser-186, and Gln-240. The segment covering Leu-278–Asp-287 has biased composition (basic and acidic residues). The tract at residues Leu-278–Gly-311 is disordered.

This sequence belongs to the NAD kinase family. It depends on a divalent metal cation as a cofactor.

The protein resides in the cytoplasm. The catalysed reaction is NAD(+) + ATP = ADP + NADP(+) + H(+). Its function is as follows. Involved in the regulation of the intracellular balance of NAD and NADP, and is a key enzyme in the biosynthesis of NADP. Catalyzes specifically the phosphorylation on 2'-hydroxyl of the adenosine moiety of NAD to yield NADP. The protein is NAD kinase of Moorella thermoacetica (strain ATCC 39073 / JCM 9320).